Here is a 491-residue protein sequence, read N- to C-terminus: Glutamate--tRNA ligase (491 aa).

Positions 9–19 (PSPTGTPHVGM) match the 'HIGH' region motif. The 'KMSKS' region motif lies at 253–257 (KLSKR). Residue Lys-256 participates in ATP binding.

Belongs to the class-I aminoacyl-tRNA synthetase family. Glutamate--tRNA ligase type 1 subfamily. Monomer.

The protein localises to the cytoplasm. The enzyme catalyses tRNA(Glu) + L-glutamate + ATP = L-glutamyl-tRNA(Glu) + AMP + diphosphate. Its function is as follows. Catalyzes the attachment of glutamate to tRNA(Glu) in a two-step reaction: glutamate is first activated by ATP to form Glu-AMP and then transferred to the acceptor end of tRNA(Glu). This is Glutamate--tRNA ligase from Leifsonia xyli subsp. xyli (strain CTCB07).